The following is a 208-amino-acid chain: Uracil phosphoribosyltransferase (208 aa).

Residues arginine 78, arginine 103, and 130-138 (DPMLATGGS) each bind 5-phospho-alpha-D-ribose 1-diphosphate. Residues isoleucine 193 and 198–200 (GDA) each bind uracil. Residue aspartate 199 coordinates 5-phospho-alpha-D-ribose 1-diphosphate.

Belongs to the UPRTase family. Requires Mg(2+) as cofactor.

It catalyses the reaction UMP + diphosphate = 5-phospho-alpha-D-ribose 1-diphosphate + uracil. Its pathway is pyrimidine metabolism; UMP biosynthesis via salvage pathway; UMP from uracil: step 1/1. With respect to regulation, allosterically activated by GTP. Its function is as follows. Catalyzes the conversion of uracil and 5-phospho-alpha-D-ribose 1-diphosphate (PRPP) to UMP and diphosphate. This is Uracil phosphoribosyltransferase from Salmonella agona (strain SL483).